The sequence spans 506 residues: Transforming growth factor beta-1-induced transcript 1 protein (506 aa).

The LD motif 1 motif lies at 3-15 (DLDALLADLQITT). Residues 15 to 62 (TPPRCPVLLTDSPEKPQPTETRPPPPPYDPKTAMSNKTSDHETFPVDK) form a disordered region. The segment covering 52 to 62 (TSDHETFPVDK) has biased composition (basic and acidic residues). Short sequence motifs (LD motif) lie at residues 87–99 (ELDR…NATQ) and 139–150 (ELDRLMASLSDF). 2 disordered regions span residues 154 to 201 (NTVS…PTPK) and 221 to 244 (SDEV…ATSV). A compositionally biased stretch (basic and acidic residues) spans 168–177 (GSEEVSRPGD). Residues 248 to 260 (DLDSMLVKLQSGL) carry the LD motif 4 motif. 4 LIM zinc-binding domains span residues 271–330 (GLCE…LYAP), 331–388 (RCAL…RLFG), 389–448 (AVCA…RRGS), and 449–506 (LCAG…RLYG).

Belongs to the paxillin family. In terms of assembly, interacts with tcf3 and tcf7l2.

It is found in the cell junction. The protein localises to the focal adhesion. It localises to the nucleus matrix. Its subcellular location is the cytoplasm. The protein resides in the cytoskeleton. Functionally, functions as a molecular adapter coordinating multiple protein-protein interactions at the focal adhesion complex and in the nucleus. May regulate both Wnt and steroid signaling pathways and play a role in the processes of cell growth, proliferation, migration, differentiation and senescence. May have a zinc-dependent DNA-binding activity. The protein is Transforming growth factor beta-1-induced transcript 1 protein (tgfb1i1) of Xenopus laevis (African clawed frog).